The following is a 20-amino-acid chain: Toxin TpF21-Cocle (20 aa).

The 20-residue stretch at 1–20 folds into the LCN-type CS-alpha/beta domain; the sequence is KDGYLVGNDGCKYSCNTYPK.

The protein belongs to the long (4 C-C) scorpion toxin superfamily. Sodium channel inhibitor family. Beta subfamily. As to expression, expressed by the venom gland.

The protein resides in the secreted. Its function is as follows. Beta toxins bind voltage-independently at site-4 of sodium channels (Nav) and shift the voltage of activation toward more negative potentials thereby affecting sodium channel activation and promoting spontaneous and repetitive firing. This chain is Toxin TpF21-Cocle, found in Tityus pachyurus (Colombian scorpion).